Here is a 507-residue protein sequence, read N- to C-terminus: uncharacterized protein (507 aa).

12 helical membrane passes run 46-66 (WIVL…WIGY), 83-103 (AWLS…AMWA), 112-132 (AVLI…ISSL), 141-161 (FPIC…IMFL), 181-201 (IGVM…PAIV), 207-227 (VIWL…IATF), 263-283 (IILL…YTVM), 299-319 (VCAA…SIFV), 328-348 (TLKI…QLTL), 354-374 (VILG…YPIG), 389-409 (TSTG…VFIM), and 442-462 (MSIM…VVLF). A compositionally biased stretch (basic and acidic residues) spans 477 to 493 (ATADKAKELSNQNKDRI). The interval 477-507 (ATADKAKELSNQNKDRITLQAESAVEPLQKK) is disordered.

The protein resides in the membrane. This is an uncharacterized protein from Caenorhabditis elegans.